A 400-amino-acid polypeptide reads, in one-letter code: Carbamoyl phosphate synthase small chain (400 aa).

The interval 1–199 (MSNETNANST…PYVIEAEGEA (199 aa)) is CPSase. Positions 66, 250, and 252 each coordinate L-glutamine. Residues 200–395 (RHTVVAYDLG…VALMDEDSEN (196 aa)) enclose the Glutamine amidotransferase type-1 domain. The active-site Nucleophile is Cys278. Positions 279, 282, 320, 322, and 323 each coordinate L-glutamine. Catalysis depends on residues His368 and Glu370.

The protein belongs to the CarA family. Composed of two chains; the small (or glutamine) chain promotes the hydrolysis of glutamine to ammonia, which is used by the large (or ammonia) chain to synthesize carbamoyl phosphate. Tetramer of heterodimers (alpha,beta)4.

It carries out the reaction hydrogencarbonate + L-glutamine + 2 ATP + H2O = carbamoyl phosphate + L-glutamate + 2 ADP + phosphate + 2 H(+). It catalyses the reaction L-glutamine + H2O = L-glutamate + NH4(+). It functions in the pathway amino-acid biosynthesis; L-arginine biosynthesis; carbamoyl phosphate from bicarbonate: step 1/1. It participates in pyrimidine metabolism; UMP biosynthesis via de novo pathway; (S)-dihydroorotate from bicarbonate: step 1/3. Small subunit of the glutamine-dependent carbamoyl phosphate synthetase (CPSase). CPSase catalyzes the formation of carbamoyl phosphate from the ammonia moiety of glutamine, carbonate, and phosphate donated by ATP, constituting the first step of 2 biosynthetic pathways, one leading to arginine and/or urea and the other to pyrimidine nucleotides. The small subunit (glutamine amidotransferase) binds and cleaves glutamine to supply the large subunit with the substrate ammonia. The chain is Carbamoyl phosphate synthase small chain from Corynebacterium efficiens (strain DSM 44549 / YS-314 / AJ 12310 / JCM 11189 / NBRC 100395).